The following is a 703-amino-acid chain: MTTTNWSLKVDRGRQTWEYSQEKKEATDVDIHLLRLKEPGTHCPEGCDLNRAKTPQQAIKKAFQYFSKVQTEDGHWAGDYGGPMFLLPGLVITCYVTGYQLPESTQREIIRYLFNRQNPVDGGWGLHIEAHSDIFGTTLQYVSLRLLGVPADHPSVVKARTFLLQNGGATGIPSWGKFWLATLNAYDWNGLNPIPIEFWLLPYNLPIAPGRWWCHCRMVYLPMSYIYAKKTTGPLTDLVKDLRREIYCQEYEKINWSEQRNNISKLDMYYEHTSLLNVINGSLNAYEKVHSKWLRDKAIDYTFDHIRYEDEQTKYIDIGPVNKTVNMLCVWDREGKSPAFYKHADRLKDYLWLSFDGMKMQGYNGSQLWDTAFTIQAFMESGIANQFQDCMKLAGHYLDISQVPEDARDMKHYHRHYSKGAWPFSTVDHGWPISDCTAEGIKSALALRSLPFIEPISLDRIADGINVLLTLQNGDGGWASYENTRGPKWLEKFNPSEVFQNIMIDYSYVECSAACIQAMSAFRKHAPNHPRIKEINRSIARGVKFIKSIQRQDGSWLGSWGICFTYGTWFGIEGLVASGEPLTSPSIVKACKFLASKQRADGGWGESFKSNVTKEYVQHETSQVVNTGWALLSLMSAKYPDRECIERGIKFLIQRQYPNGDFPQESIIGVFNFNCMISYSNYKNIFPLWALSRYNQLYLKSKI.

PFTB repeat units follow at residues 59–103 and 106–148; these read IKKA…QLPE and QREI…RLLG. Asp435 (proton donor) is an active-site residue. 4 PFTB repeats span residues 461–503, 539–579, 587–628, and 645–686; these read IADG…QNIM, IARG…VASG, IVKA…VNTG, and IERG…KNIF.

The protein belongs to the terpene cyclase/mutase family.

The enzyme catalyses (S)-2,3-epoxysqualene = cycloartenol. Its function is as follows. Converts oxidosqualene to cycloartenol (in vitro). This is Cycloartenol synthase (cas1) from Dictyostelium discoideum (Social amoeba).